The sequence spans 347 residues: Elongation factor Ts (347 aa).

The interval 80-83 (TDFV) is involved in Mg(2+) ion dislocation from EF-Tu.

The protein belongs to the EF-Ts family.

Its subcellular location is the cytoplasm. Functionally, associates with the EF-Tu.GDP complex and induces the exchange of GDP to GTP. It remains bound to the aminoacyl-tRNA.EF-Tu.GTP complex up to the GTP hydrolysis stage on the ribosome. This Streptococcus sanguinis (strain SK36) protein is Elongation factor Ts.